Here is a 614-residue protein sequence, read N- to C-terminus: Putative binding protein BMEII0691 (614 aa).

The first 28 residues, 1–28, serve as a signal peptide directing secretion; it reads MNRFIAFFRSVFLIGLVATAFGALPARA.

This sequence belongs to the bacterial solute-binding protein 5 family.

It is found in the periplasm. In Brucella melitensis biotype 1 (strain ATCC 23456 / CCUG 17765 / NCTC 10094 / 16M), this protein is Putative binding protein BMEII0691.